Reading from the N-terminus, the 388-residue chain is Zinc finger protein ubi-d4 A (388 aa).

The disordered stretch occupies residues Gly60–Arg190. 2 stretches are compositionally biased toward basic and acidic residues: residues Pro97 to Gly107 and Asp123 to Asp137. Residues Pro156–Glu170 show a composition bias toward acidic residues. The C2H2-type zinc finger occupies Tyr205–His228. A disordered region spans residues Glu233–Gly264. A compositionally biased stretch (basic and acidic residues) spans His251–Pro262. 2 PHD-type zinc fingers span residues Asn269 to Cys329 and Cys326 to Leu376.

This sequence belongs to the requiem/DPF family.

The protein localises to the cytoplasm. The protein resides in the nucleus. In terms of biological role, may be a transcription factor required for the apoptosis response following survival factor withdrawal from myeloid cells. Might also have a role in the development and maturation of lymphoid cells. The polypeptide is Zinc finger protein ubi-d4 A (req-a) (Xenopus laevis (African clawed frog)).